A 231-amino-acid chain; its full sequence is Ion-translocating oxidoreductase complex subunit E (231 aa).

Helical transmembrane passes span 18 to 38 (ALVQ…ATNA), 39 to 59 (LGLG…ISTL), 63 to 83 (TPSE…VSAV), 86 to 106 (LINA…PLIV), 125 to 145 (ALSA…MFVL), and 182 to 202 (PFLL…MLAG).

This sequence belongs to the NqrDE/RnfAE family. The complex is composed of six subunits: RsxA, RsxB, RsxC, RsxD, RsxE and RsxG.

It is found in the cell inner membrane. Functionally, part of a membrane-bound complex that couples electron transfer with translocation of ions across the membrane. Required to maintain the reduced state of SoxR. The sequence is that of Ion-translocating oxidoreductase complex subunit E from Escherichia coli O6:K15:H31 (strain 536 / UPEC).